Consider the following 177-residue polypeptide: MAELTTIARPYAKAAFDIAVEHNAVDNWAEMLTFAALVSENETMKPLLTGSLASTKLAALFISVCGEQINEQGQNLIKVMAENGRLKVLPAVSELFAQYRNEWAKEVEADVVSAAELSSEQQQQISISLEKRLARKVKLNCSTDAALIAGVIIKAGDLVIDGSVRGKLSRLSEKLQS.

It belongs to the ATPase delta chain family. In terms of assembly, F-type ATPases have 2 components, F(1) - the catalytic core - and F(0) - the membrane proton channel. F(1) has five subunits: alpha(3), beta(3), gamma(1), delta(1), epsilon(1). F(0) has three main subunits: a(1), b(2) and c(10-14). The alpha and beta chains form an alternating ring which encloses part of the gamma chain. F(1) is attached to F(0) by a central stalk formed by the gamma and epsilon chains, while a peripheral stalk is formed by the delta and b chains.

It is found in the cell inner membrane. In terms of biological role, f(1)F(0) ATP synthase produces ATP from ADP in the presence of a proton or sodium gradient. F-type ATPases consist of two structural domains, F(1) containing the extramembraneous catalytic core and F(0) containing the membrane proton channel, linked together by a central stalk and a peripheral stalk. During catalysis, ATP synthesis in the catalytic domain of F(1) is coupled via a rotary mechanism of the central stalk subunits to proton translocation. This protein is part of the stalk that links CF(0) to CF(1). It either transmits conformational changes from CF(0) to CF(1) or is implicated in proton conduction. The polypeptide is ATP synthase subunit delta (Shewanella oneidensis (strain ATCC 700550 / JCM 31522 / CIP 106686 / LMG 19005 / NCIMB 14063 / MR-1)).